A 303-amino-acid polypeptide reads, in one-letter code: Caspase-7 (303 aa).

The segment covering 1 to 21 has biased composition (acidic residues); it reads MADDQGCIEEQGVEDSANEDS. A disordered region spans residues 1–30; the sequence is MADDQGCIEEQGVEDSANEDSVDAKPDRSS. Residue Ala-2 is modified to N-acetylalanine. Positions 2-23 are cleaved as a propeptide — N-terminally processed; it reads ADDQGCIEEQGVEDSANEDSVD. Position 30 is a phosphoserine; by PAK2 (Ser-30). Ser-37 carries the phosphoserine modification. The segment at 38-41 is exosite; it reads KKKK. Positions 76-87 are loop L1; that stretch reads KNFDKVTGMGVR. His-144 is an active-site residue. The residue at position 173 (Thr-173) is a Phosphothreonine; by PAK2. Cys-186 is a catalytic residue. Positions 187 to 196 are loop L2; it reads RGTELDDGIQ. Positions 199 to 206 are excised as a propeptide; sequence SGPINDTD. The interval 226–238 is loop L3; the sequence is VPGYYSWRSPGRG. A (Microbial infection) ADP-riboxanated arginine modification is found at Arg-233. Ser-239 bears the Phosphoserine; by PAK2 mark. The tract at residues 274–288 is loop L4; the sequence is ESQSDDPHFHEKKQI.

It belongs to the peptidase C14A family. As to quaternary structure, heterotetramer that consists of two anti-parallel arranged heterodimers, each one formed by a 20 kDa (p20) and a 11 kDa (p11) subunit. Interacts with XIAP (via its second BIR domain); inhibiting CASP7 activity. Interacts with BIRC6/bruce. Interacts with ATXN3 (short isoform 1). Interacts with HSPA5. Post-translationally, cleavage by different proteases, such as granzyme B (GZMB), caspase-1 (CASP1), caspase-8 (CASP8), caspase-9 (CASP9) or caspase-10 (CASP10) generate the two active subunits. Its involvement in different programmed cell death processes is probably specified by the protease that activates CASP7. Cleaved and activated by initiator caspases (CASP8, CASP9 and/or CASP10), leading to execution phase of apoptosis. Cleavage and maturation by GZMB regulates granzyme-mediated programmed cell death. Cleaved and activated by CASP1 in response to bacterial infection. Propeptide domains can also be cleaved efficiently by CASP3. Active heterodimers between the small subunit of caspase-7 and the large subunit of CASP3, and vice versa, also occur. Also cleaved at the N-terminus at alternative sites by CAPN1, leading to its activation. Phosphorylation at Ser-30 and Ser-239 by PAK2 inhibits its activity. Phosphorylation at Ser-30 prevents cleavage and activation by initiator caspase CASP9, while phosphorylation at Ser-239 prevents thiol protease activity by preventing substrate-binding. In terms of processing, (Microbial infection) ADP-riboxanation by C.violaceum CopC blocks CASP7 processing, preventing CASP7 activation and ability to recognize and cleave substrates. Post-translationally, ubiquitinated by BIRC6; this activity is inhibited by DIABLO/SMAC. Highly expressed in lung, skeletal muscle, liver, kidney, spleen and heart, and moderately in testis. No expression in the brain.

It localises to the cytoplasm. The protein resides in the cytosol. It is found in the nucleus. Its subcellular location is the secreted. The protein localises to the extracellular space. It catalyses the reaction Strict requirement for an Asp residue at position P1 and has a preferred cleavage sequence of Asp-Glu-Val-Asp-|-.. During activation, the N-terminal disordered prodomain is removed by cleavage. Concomitantly, double cleavage gives rise to a large Caspase-7 subunit p20 and a small Caspase-7 subunit p11. The two large and two small subunits then assemble to form the active CASP7 complex. Can be cleaved and activated by different caspases, depending on the context. Cleaved and activated by initiator caspases (CASP8, CASP9 and/or CASP10), leading to execution phase of apoptosis. Inhibited by XIAP, which directly binds to the active site pocket and obstructs substrate entry. Cleavage and maturation by GZMB regulates granzyme-mediated programmed cell death. Cleavage and maturation by CASP1 regulates pyroptosis. Phosphorylation at Ser-30 and Ser-239 by PAK2 inhibits its activity. Inhibited by isatin sulfonamides. Inhibited by 2-(2,4-Dichlorophenoxy)- N-(2-mercapto-ethyl)-acetamide (DICA) and 5-Fluoro-1H-indole-2- carboxylic acid (2-mercapto-ethyl)-amide (FICA) allosteric inhibitors, which disrupt an interaction between Arg-187 and Tyr-223. Specifically inhibited by DARPin D7.18 and D7.43, which specifically bind to the precursor CASP7 and prevent its processing and activation. Inhibited by BIRC6; following inhibition of BIRC6-caspase binding by DIABLO/SMAC, BIRC6 is subjected to caspase cleavage, leading to an increase in active caspases. In terms of biological role, thiol protease involved in different programmed cell death processes, such as apoptosis, pyroptosis or granzyme-mediated programmed cell death, by proteolytically cleaving target proteins. Has a marked preference for Asp-Glu-Val-Asp (DEVD) consensus sequences, with some plasticity for alternate non-canonical sequences. Its involvement in the different programmed cell death processes is probably determined by upstream proteases that activate CASP7. Acts as an effector caspase involved in the execution phase of apoptosis: following cleavage and activation by initiator caspases (CASP8, CASP9 and/or CASP10), mediates execution of apoptosis by catalyzing cleavage of proteins, such as CLSPN, PARP1, PTGES3 and YY1. Compared to CASP3, acts as a minor executioner caspase and cleaves a limited set of target proteins. Acts as a key regulator of the inflammatory response in response to bacterial infection by catalyzing cleavage and activation of the sphingomyelin phosphodiesterase SMPD1 in the extracellular milieu, thereby promoting membrane repair. Regulates pyroptosis in intestinal epithelial cells: cleaved and activated by CASP1 in response to S.typhimurium infection, promoting its secretion to the extracellular milieu, where it catalyzes activation of SMPD1, generating ceramides that repair membranes and counteract the action of gasdermin-D (GSDMD) pores. Regulates granzyme-mediated programmed cell death in hepatocytes: cleaved and activated by granzyme B (GZMB) in response to bacterial infection, promoting its secretion to the extracellular milieu, where it catalyzes activation of SMPD1, generating ceramides that repair membranes and counteract the action of perforin (PRF1) pores. Following cleavage by CASP1 in response to inflammasome activation, catalyzes processing and inactivation of PARP1, alleviating the transcription repressor activity of PARP1. Acts as an inhibitor of type I interferon production during virus-induced apoptosis by mediating cleavage of antiviral proteins CGAS, IRF3 and MAVS, thereby preventing cytokine overproduction. Cleaves and activates sterol regulatory element binding proteins (SREBPs). Cleaves phospholipid scramblase proteins XKR4, XKR8 and XKR9. In case of infection, catalyzes cleavage of Kaposi sarcoma-associated herpesvirus protein ORF57, thereby preventing expression of viral lytic genes. Cleaves BIRC6 following inhibition of BIRC6-caspase binding by DIABLO/SMAC. Its function is as follows. Lacks enzymatic activity. This is Caspase-7 from Homo sapiens (Human).